Consider the following 1466-residue polypeptide: DNA-directed RNA polymerase subunit beta'' (1466 aa).

Cys-220, Cys-296, Cys-303, and Cys-306 together coordinate Zn(2+). The disordered stretch occupies residues 618-725 (TREEDLEDEY…EDEYDSSEED (108 aa)). 3 stretches are compositionally biased toward acidic residues: residues 621–631 (EDLEDEYETLE), 639–651 (DEYEYETLEDEYG), and 707–725 (LEEDLEEDSEDEYDSSEED).

Belongs to the RNA polymerase beta' chain family. RpoC2 subfamily. In plastids the minimal PEP RNA polymerase catalytic core is composed of four subunits: alpha, beta, beta', and beta''. When a (nuclear-encoded) sigma factor is associated with the core the holoenzyme is formed, which can initiate transcription. Requires Zn(2+) as cofactor.

Its subcellular location is the plastid. The protein localises to the chloroplast. The catalysed reaction is RNA(n) + a ribonucleoside 5'-triphosphate = RNA(n+1) + diphosphate. DNA-dependent RNA polymerase catalyzes the transcription of DNA into RNA using the four ribonucleoside triphosphates as substrates. This Agrostis stolonifera (Creeping bentgrass) protein is DNA-directed RNA polymerase subunit beta''.